A 453-amino-acid polypeptide reads, in one-letter code: Phosphoglucosamine mutase (453 aa).

Ser102 serves as the catalytic Phosphoserine intermediate. Positions 102, 244, 246, and 248 each coordinate Mg(2+). Ser102 carries the post-translational modification Phosphoserine.

The protein belongs to the phosphohexose mutase family. Requires Mg(2+) as cofactor. Post-translationally, activated by phosphorylation.

It catalyses the reaction alpha-D-glucosamine 1-phosphate = D-glucosamine 6-phosphate. Functionally, catalyzes the conversion of glucosamine-6-phosphate to glucosamine-1-phosphate. This is Phosphoglucosamine mutase from Pelobacter propionicus (strain DSM 2379 / NBRC 103807 / OttBd1).